We begin with the raw amino-acid sequence, 375 residues long: Serpin B5 (375 aa).

N-linked (GlcNAc...) asparagine glycans are attached at residues asparagine 99, asparagine 133, asparagine 155, asparagine 188, and asparagine 361.

Belongs to the serpin family. Ov-serpin subfamily. In terms of assembly, interacts with IRF6.

It is found in the secreted. The protein localises to the extracellular space. Functionally, tumor suppressor. It blocks the growth, invasion, and metastatic properties of mammary tumors. As it does not undergo the S (stressed) to R (relaxed) conformational transition characteristic of active serpins, it exhibits no serine protease inhibitory activity. The polypeptide is Serpin B5 (SERPINB5) (Plecturocebus moloch (Dusky titi monkey)).